A 120-amino-acid chain; its full sequence is Probable non-functional immunoglobulin kappa variable 2D-24 (120 aa).

Positions 1 to 19 are cleaved as a signal peptide; the sequence is MRLLAQLLGLLMLWVPGSS. The Ig-like domain maps to 20 to 120; that stretch reads GDIVMTQTPL…YYCTQATQFP (101 aa). The segment at 21–43 is framework-1; it reads DIVMTQTPLSSPVTLGQPASISF. A complementarity-determining-1 region spans residues 44 to 59; the sequence is RSSQSLVHSDGNTYLS. The interval 60-74 is framework-2; that stretch reads WLQQRPGQPPRLLIY. Residues 75–81 form a complementarity-determining-2 region; the sequence is KVSNRFS. Positions 82–113 are framework-3; the sequence is GVPDRFSGSGAGTDFTLKISRVEAEDVGVYYC. The segment at 114–120 is complementarity-determining-3; sequence TQATQFP.

Most probably, the immunoglobulin is not assembled due to incorrect folding of light chain. Immunoglobulins are composed of two identical heavy chains and two identical light chains; disulfide-linked.

It is found in the secreted. The protein localises to the cell membrane. Probable non-functional open reading frame (ORF) of V region of the variable domain of immunoglobulin light chains. Non-functional ORF generally cannot participate in the synthesis of a productive immunoglobulin chain due to altered V-(D)-J or switch recombination and/or splicing site (at mRNA level) and/or conserved amino acid change (protein level). Immunoglobulins, also known as antibodies, are membrane-bound or secreted glycoproteins produced by B lymphocytes. In the recognition phase of humoral immunity, the membrane-bound immunoglobulins serve as receptors which, upon binding of a specific antigen, trigger the clonal expansion and differentiation of B lymphocytes into immunoglobulins-secreting plasma cells. Secreted immunoglobulins mediate the effector phase of humoral immunity, which results in the elimination of bound antigens. The antigen binding site is formed by the variable domain of one heavy chain, together with that of its associated light chain. Thus, each immunoglobulin has two antigen binding sites with remarkable affinity for a particular antigen. The variable domains are assembled by a process called V-(D)-J rearrangement and can then be subjected to somatic hypermutations which, after exposure to antigen and selection, allow affinity maturation for a particular antigen. This chain is Probable non-functional immunoglobulin kappa variable 2D-24, found in Homo sapiens (Human).